The sequence spans 331 residues: Ketol-acid reductoisomerase (NADP(+)) (331 aa).

Residues 2–181 (IKKYYESDAD…GATRAVVFET (180 aa)) enclose the KARI N-terminal Rossmann domain. NADP(+) contacts are provided by residues 25 to 28 (YGSQ), arginine 48, serine 52, and 82 to 85 (DESQ). Residue histidine 107 is part of the active site. Residue glycine 133 coordinates NADP(+). Residues 182–327 (TFREETETDL…AEIRGLMPQF (146 aa)) enclose the KARI C-terminal knotted domain. Residues aspartate 190, glutamate 194, glutamate 226, and glutamate 230 each contribute to the Mg(2+) site. Serine 251 contacts substrate.

This sequence belongs to the ketol-acid reductoisomerase family. It depends on Mg(2+) as a cofactor.

The enzyme catalyses (2R)-2,3-dihydroxy-3-methylbutanoate + NADP(+) = (2S)-2-acetolactate + NADPH + H(+). It catalyses the reaction (2R,3R)-2,3-dihydroxy-3-methylpentanoate + NADP(+) = (S)-2-ethyl-2-hydroxy-3-oxobutanoate + NADPH + H(+). The protein operates within amino-acid biosynthesis; L-isoleucine biosynthesis; L-isoleucine from 2-oxobutanoate: step 2/4. Its pathway is amino-acid biosynthesis; L-valine biosynthesis; L-valine from pyruvate: step 2/4. Functionally, involved in the biosynthesis of branched-chain amino acids (BCAA). Catalyzes an alkyl-migration followed by a ketol-acid reduction of (S)-2-acetolactate (S2AL) to yield (R)-2,3-dihydroxy-isovalerate. In the isomerase reaction, S2AL is rearranged via a Mg-dependent methyl migration to produce 3-hydroxy-3-methyl-2-ketobutyrate (HMKB). In the reductase reaction, this 2-ketoacid undergoes a metal-dependent reduction by NADPH to yield (R)-2,3-dihydroxy-isovalerate. This Methanosphaerula palustris (strain ATCC BAA-1556 / DSM 19958 / E1-9c) protein is Ketol-acid reductoisomerase (NADP(+)).